We begin with the raw amino-acid sequence, 185 residues long: CASP-like protein 2C2 (185 aa).

Residues 1 to 22 are Cytoplasmic-facing; that stretch reads MAAAARVSEVKAEGLLRGACTA. The helical transmembrane segment at 23-43 threads the bilayer; that stretch reads LAAAAALLVGLSTQTETVLLV. Residues 44 to 53 lie on the Extracellular side of the membrane; the sequence is RKKATVKDVQ. The helical transmembrane segment at 54 to 74 threads the bilayer; the sequence is ALWVLAMAAAAAAGYHLLQLL. Over 75-104 the chain is Cytoplasmic; that stretch reads KCLYLGRVGGARPCRRSSRALAWTCLLLDK. The helical transmembrane segment at 105–125 threads the bilayer; the sequence is ACAYTTFATTVAAAQACVVAL. Residues 126–146 lie on the Extracellular side of the membrane; the sequence is DGAHALQWTKLCNIYTRFCEQ. The helical transmembrane segment at 147-167 threads the bilayer; that stretch reads VAGSLVLGMLAAVGTAVLSAA. Residues 168–185 lie on the Cytoplasmic side of the membrane; sequence SARNVFRHYASLETYAAH.

The protein belongs to the Casparian strip membrane proteins (CASP) family. Homodimer and heterodimers.

The protein localises to the cell membrane. The sequence is that of CASP-like protein 2C2 from Zea mays (Maize).